Consider the following 148-residue polypeptide: UPF0178 protein Pcar_2632 (148 aa).

This sequence belongs to the UPF0178 family.

The protein is UPF0178 protein Pcar_2632 of Syntrophotalea carbinolica (strain DSM 2380 / NBRC 103641 / GraBd1) (Pelobacter carbinolicus).